Consider the following 135-residue polypeptide: Small ribosomal subunit protein uS9 (135 aa).

Positions 108 to 118 are enriched in basic and acidic residues; that stretch reads VGDPRRTEPHK. A disordered region spans residues 108–135; sequence VGDPRRTEPHKPNRSTKGPRAKRQKSYR. Residues 119–135 show a composition bias toward basic residues; it reads PNRSTKGPRAKRQKSYR.

The protein belongs to the universal ribosomal protein uS9 family.

The chain is Small ribosomal subunit protein uS9 (rps9) from Pyrococcus abyssi (strain GE5 / Orsay).